A 30-amino-acid chain; its full sequence is Cycloviolacin-H3 (30 aa).

A cross-link (cyclopeptide (Gly-Asn)) is located at residues 1–30; the sequence is GLPVCGETCFGGTCNTPGCICDPWPVCTRN. 3 cysteine pairs are disulfide-bonded: cysteine 5-cysteine 19, cysteine 9-cysteine 21, and cysteine 14-cysteine 27.

This is a cyclic peptide.

Its function is as follows. Probably participates in a plant defense mechanism. In Viola hederacea (Australian violet), this protein is Cycloviolacin-H3.